We begin with the raw amino-acid sequence, 29 residues long: Glucagon (29 aa).

This sequence belongs to the glucagon family.

It localises to the secreted. In terms of biological role, promotes hydrolysis of glycogen and lipids, and raises the blood sugar level. This is Glucagon (gcg) from Thunnus obesus (Bigeye tuna).